Reading from the N-terminus, the 289-residue chain is Sphingomyelinase D (289 aa).

A signal peptide spans 1 to 22 (MQSISVLICVLLALSILNFTVA). Residue His34 is part of the active site. Residues Glu54, Asp56, and Asp103 each coordinate Mg(2+). The SMD-tail motif lies at 282-289 (ATEDDAPW).

Belongs to the sphingomyelinase D/phospholipase D family. Mg(2+) is required as a cofactor.

The protein resides in the secreted. The catalysed reaction is a sphingomyelin + H2O = an N-acylsphing-4-enine 1-phosphate + choline + H(+). Sphingomyelinase activity is reduced by 33 percent following addition of EDTA. In terms of biological role, catalyzes the hydrolysis of sphingomyelin. Sphingomyelinases D are produced by some spider in their venoms, but also by arthropods such as ticks, or pathogenic bacteria and fungi. They might play a role in pathogenicity through different mechanisms, such as membrane destabilization and host cell penetration, but also pulmonary inflammation and cutaneous lesions. In Aspergillus flavus (strain ATCC 200026 / FGSC A1120 / IAM 13836 / NRRL 3357 / JCM 12722 / SRRC 167), this protein is Sphingomyelinase D.